Here is a 142-residue protein sequence, read N- to C-terminus: Large ribosomal subunit protein uL11 (142 aa).

This sequence belongs to the universal ribosomal protein uL11 family. In terms of assembly, part of the ribosomal stalk of the 50S ribosomal subunit. Interacts with L10 and the large rRNA to form the base of the stalk. L10 forms an elongated spine to which L12 dimers bind in a sequential fashion forming a multimeric L10(L12)X complex. One or more lysine residues are methylated.

In terms of biological role, forms part of the ribosomal stalk which helps the ribosome interact with GTP-bound translation factors. The polypeptide is Large ribosomal subunit protein uL11 (Bartonella bacilliformis (strain ATCC 35685 / KC583 / Herrer 020/F12,63)).